A 403-amino-acid polypeptide reads, in one-letter code: MKIERAYTIVTAPGRNFVTLKIVTDEGTYGIGDATLNGREMAVVAYLEEHVIPALIGRDPQRIEDIWHYLYRGAYWRRGPVTMSAIGAVDMALWDIKAKVAGMPLYQLLGGKSRERVMVYGHATGKDIEACLDEVARHVEEGYRAVRVQAGVPGIASIYGVAKKPGERYEPADAELPAEHVWNTAKYLNHAPKLFAAVRERFGDDLHVLHDVHHRLTPIEAARLGKEVEPFNLFWLEDCVPAENQESFGLIRQHTTTPLAVGEVFNSLYDAKALIENQWIDYIRAPLTHAGGITHVRRLADLAGLYHVRTGFHGPTDLSPVCLGAAIHFDTWVPNFGIQEYMPHEAVTDEVFPHDYRFEDGHFLVGETPGHGVDIDEEKARKYPYRRASLPVNRLEDGTLWHW.

2 residues coordinate substrate: N37 and H122. The Proton donor/acceptor role is filled by Y159. D211 serves as a coordination point for Mg(2+). H213 functions as the Proton donor/acceptor in the catalytic mechanism. Residues E237 and E263 each contribute to the Mg(2+) site. E263, R284, H313, D317, and E340 together coordinate substrate.

It belongs to the mandelate racemase/muconate lactonizing enzyme family. GalD subfamily. Mg(2+) is required as a cofactor.

The catalysed reaction is D-mannonate = 2-dehydro-3-deoxy-D-gluconate + H2O. The enzyme catalyses D-gluconate = 2-dehydro-3-deoxy-D-gluconate + H2O. In terms of biological role, has low dehydratase activity with D-mannonate and D-gluconate, suggesting that these are not physiological substrates and that it has no significant role in the in vivo degradation of these compounds. Has no detectable activity with a panel of 70 other acid sugars (in vitro). This Halomonas elongata (strain ATCC 33173 / DSM 2581 / NBRC 15536 / NCIMB 2198 / 1H9) protein is D-galactonate dehydratase family member RspA (rspA).